Consider the following 481-residue polypeptide: UDP-N-acetylmuramoyl-L-alanyl-D-glutamate--L-lysine ligase (481 aa).

S42 contributes to the UDP-N-acetyl-alpha-D-muramoyl-L-alanyl-D-glutamate binding site. 118–124 (GTKGKTT) is a binding site for ATP. UDP-N-acetyl-alpha-D-muramoyl-L-alanyl-D-glutamate is bound by residues 160–161 (TT), S187, and R195. K229 carries the N6-carboxylysine modification. Residues 404–407 (DDPN) carry the L-lysine recognition motif motif.

The protein belongs to the MurCDEF family. MurE subfamily. Post-translationally, carboxylation is probably crucial for Mg(2+) binding and, consequently, for the gamma-phosphate positioning of ATP.

Its subcellular location is the cytoplasm. The enzyme catalyses UDP-N-acetyl-alpha-D-muramoyl-L-alanyl-D-glutamate + L-lysine + ATP = UDP-N-acetyl-alpha-D-muramoyl-L-alanyl-gamma-D-glutamyl-L-lysine + ADP + phosphate + H(+). It participates in cell wall biogenesis; peptidoglycan biosynthesis. In terms of biological role, catalyzes the addition of L-lysine to the nucleotide precursor UDP-N-acetylmuramoyl-L-alanyl-D-glutamate (UMAG) in the biosynthesis of bacterial cell-wall peptidoglycan. This is UDP-N-acetylmuramoyl-L-alanyl-D-glutamate--L-lysine ligase from Streptococcus sanguinis (strain SK36).